Here is an 841-residue protein sequence, read N- to C-terminus: Probable alpha-glucuronidase A (841 aa).

The N-terminal stretch at 1–20 is a signal peptide; sequence MRGLNLFQLILALLLSMVAA. N-linked (GlcNAc...) asparagine glycosylation is found at asparagine 51, asparagine 76, asparagine 85, asparagine 149, asparagine 222, asparagine 279, asparagine 310, asparagine 343, asparagine 450, asparagine 465, asparagine 527, asparagine 576, asparagine 682, asparagine 723, and asparagine 732.

It belongs to the glycosyl hydrolase 67 family.

It is found in the secreted. The enzyme catalyses an alpha-D-glucuronoside + H2O = D-glucuronate + an alcohol. Alpha-glucuronidase involved in the hydrolysis of xylan, a major structural heterogeneous polysaccharide found in plant biomass representing the second most abundant polysaccharide in the biosphere, after cellulose. Releases 4-O-methylglucuronic acid from xylan. This is Probable alpha-glucuronidase A (aguA) from Aspergillus niger (strain ATCC MYA-4892 / CBS 513.88 / FGSC A1513).